Reading from the N-terminus, the 717-residue chain is Glycine--tRNA ligase beta subunit (717 aa).

It belongs to the class-II aminoacyl-tRNA synthetase family. As to quaternary structure, tetramer of two alpha and two beta subunits.

It is found in the cytoplasm. The enzyme catalyses tRNA(Gly) + glycine + ATP = glycyl-tRNA(Gly) + AMP + diphosphate. This is Glycine--tRNA ligase beta subunit from Agrobacterium fabrum (strain C58 / ATCC 33970) (Agrobacterium tumefaciens (strain C58)).